We begin with the raw amino-acid sequence, 369 residues long: Putative F-box protein At1g70960 (369 aa).

In terms of domain architecture, F-box spans 3–54; sequence NTSFETLPRHMQMEILSRVPLKFLMKFMCVSKKWASIIRGEEFREDYLFQSM.

The sequence is that of Putative F-box protein At1g70960 from Arabidopsis thaliana (Mouse-ear cress).